The sequence spans 82 residues: Cytochrome b-c1 complex subunit 8 (82 aa).

Residues 1–43 (MGREFGNLARIRHVISYSLSPFEQRAFPSYFSKGIPNVLRRTR) lie on the Mitochondrial matrix side of the membrane. S16 carries the post-translational modification Phosphoserine. The residue at position 33 (K33) is an N6-acetyllysine; alternate. K33 carries the N6-succinyllysine; alternate modification. The helical transmembrane segment at 44-62 (ERILRVAPPFVVVYLIYTW) threads the bilayer. Residues 63-82 (GNQEFEQSKRKNPAMYENDK) lie on the Mitochondrial intermembrane side of the membrane.

Belongs to the UQCRQ/QCR8 family. As to quaternary structure, component of the ubiquinol-cytochrome c oxidoreductase (cytochrome b-c1 complex, complex III, CIII), a multisubunit enzyme composed of 11 subunits. The complex is composed of 3 respiratory subunits cytochrome b, cytochrome c1 and Rieske protein UQCRFS1, 2 core protein subunits UQCRC1/QCR1 and UQCRC2/QCR2, and 6 low-molecular weight protein subunits UQCRH/QCR6, UQCRB/QCR7, UQCRQ/QCR8, UQCR10/QCR9, UQCR11/QCR10 and subunit 9, the cleavage product of Rieske protein UQCRFS1. The complex exists as an obligatory dimer and forms supercomplexes (SCs) in the inner mitochondrial membrane with NADH-ubiquinone oxidoreductase (complex I, CI) and cytochrome c oxidase (complex IV, CIV), resulting in different assemblies (supercomplex SCI(1)III(2)IV(1) and megacomplex MCI(2)III(2)IV(2)). Interacts with UQCC6.

It is found in the mitochondrion inner membrane. In terms of biological role, component of the ubiquinol-cytochrome c oxidoreductase, a multisubunit transmembrane complex that is part of the mitochondrial electron transport chain which drives oxidative phosphorylation. The respiratory chain contains 3 multisubunit complexes succinate dehydrogenase (complex II, CII), ubiquinol-cytochrome c oxidoreductase (cytochrome b-c1 complex, complex III, CIII) and cytochrome c oxidase (complex IV, CIV), that cooperate to transfer electrons derived from NADH and succinate to molecular oxygen, creating an electrochemical gradient over the inner membrane that drives transmembrane transport and the ATP synthase. The cytochrome b-c1 complex catalyzes electron transfer from ubiquinol to cytochrome c, linking this redox reaction to translocation of protons across the mitochondrial inner membrane, with protons being carried across the membrane as hydrogens on the quinol. In the process called Q cycle, 2 protons are consumed from the matrix, 4 protons are released into the intermembrane space and 2 electrons are passed to cytochrome c. The sequence is that of Cytochrome b-c1 complex subunit 8 (Uqcrq) from Mus musculus (Mouse).